Consider the following 480-residue polypeptide: Type VI lipase adapter protein Tla3 (480 aa).

The segment at Ile410–Gly458 is disordered.

Interacts with the Tle3 toxin on one side and with the H2-T6SS component VgrG2b on the other side.

It is found in the cytoplasm. In terms of biological role, adapter protein that targets and loads the Tle3 toxin onto the H2 type VI secretion system (H2-T6SS) machinery through an interaction with the TTR domain of VgrG2b. Seems specific for Tle3. This Pseudomonas aeruginosa (strain ATCC 15692 / DSM 22644 / CIP 104116 / JCM 14847 / LMG 12228 / 1C / PRS 101 / PAO1) protein is Type VI lipase adapter protein Tla3.